We begin with the raw amino-acid sequence, 485 residues long: MKVALVSYEVYPFAKVGGLADVVGALPKYLKNFSVEPIVIMPKHKIVEKNAEKFSYSLRKIKESISVPYLKTDEKFDIYQTFIPGTQIPVYLIANDYYFSAEQVYEGPDLAEQAIYFSAAVFEALKVLGEKVDVLHINDWQTGLVPVYLKTLYKDDEFFSKTVVLLTIHNLGYQGIFDSSYMNFSGLPDYLYNIDGIEFYGKINFLKGGILFSDVINTVSPTYAQEIQTKEYGEKLDGVLRLRSSDLYGILNGIDYDEYNPETDKRIYVNYSLQEIEKKYENKKMLQKELNLPQTNDVPVIGMITRLVDQKGLDILSEVLRYILNMDVQFVLLGTGDKKYEEMFKDIEKEFPDKMSANITFDIVLAQKIYASSDMFLMPSRYEPCGLGQMYSLRYGTIPVVRYTGGLADTVMEYDEEAMKGNGFGFKEYDSAYLLKAVARAVDFFKNKKGHWKKLIENAMKTDLSWERSANEYVKIYNKALNKRR.

Lys-15 lines the ADP-alpha-D-glucose pocket.

Belongs to the glycosyltransferase 1 family. Bacterial/plant glycogen synthase subfamily.

The catalysed reaction is [(1-&gt;4)-alpha-D-glucosyl](n) + ADP-alpha-D-glucose = [(1-&gt;4)-alpha-D-glucosyl](n+1) + ADP + H(+). Its pathway is glycan biosynthesis; glycogen biosynthesis. Synthesizes alpha-1,4-glucan chains using ADP-glucose. The chain is Glycogen synthase from Thermosipho africanus (strain TCF52B).